Consider the following 475-residue polypeptide: tRNA modification GTPase MnmE (475 aa).

3 residues coordinate (6S)-5-formyl-5,6,7,8-tetrahydrofolate: Arg-24, Glu-81, and Lys-124. Positions 220–397 (GLSVVLAGQP…LRKELLRLVG (178 aa)) constitute a TrmE-type G domain. Asn-230 serves as a coordination point for K(+). GTP is bound by residues 230–235 (NVGKSS), 249–255 (TPIAGTT), 274–277 (DTAG), and 378–380 (SAR). Position 234 (Ser-234) interacts with Mg(2+). The K(+) site is built by Thr-249, Ile-251, and Thr-254. Residue Thr-255 coordinates Mg(2+). (6S)-5-formyl-5,6,7,8-tetrahydrofolate is bound at residue Lys-475.

This sequence belongs to the TRAFAC class TrmE-Era-EngA-EngB-Septin-like GTPase superfamily. TrmE GTPase family. As to quaternary structure, homodimer. Heterotetramer of two MnmE and two MnmG subunits. K(+) serves as cofactor.

Its subcellular location is the cytoplasm. Exhibits a very high intrinsic GTPase hydrolysis rate. Involved in the addition of a carboxymethylaminomethyl (cmnm) group at the wobble position (U34) of certain tRNAs, forming tRNA-cmnm(5)s(2)U34. This is tRNA modification GTPase MnmE from Cupriavidus pinatubonensis (strain JMP 134 / LMG 1197) (Cupriavidus necator (strain JMP 134)).